Reading from the N-terminus, the 347-residue chain is tRNA N6-adenosine threonylcarbamoyltransferase (347 aa).

Residues His-113 and His-117 each coordinate Fe cation. Substrate contacts are provided by residues 136–140 (IVSGG), Asp-170, Gly-183, Asp-187, and Asn-282. A Fe cation-binding site is contributed by Asp-310.

It belongs to the KAE1 / TsaD family. Fe(2+) serves as cofactor.

It localises to the cytoplasm. It catalyses the reaction L-threonylcarbamoyladenylate + adenosine(37) in tRNA = N(6)-L-threonylcarbamoyladenosine(37) in tRNA + AMP + H(+). Functionally, required for the formation of a threonylcarbamoyl group on adenosine at position 37 (t(6)A37) in tRNAs that read codons beginning with adenine. Is involved in the transfer of the threonylcarbamoyl moiety of threonylcarbamoyl-AMP (TC-AMP) to the N6 group of A37, together with TsaE and TsaB. TsaD likely plays a direct catalytic role in this reaction. The chain is tRNA N6-adenosine threonylcarbamoyltransferase from Bifidobacterium longum (strain NCC 2705).